Consider the following 693-residue polypeptide: Elongation factor G (693 aa).

One can recognise a tr-type G domain in the interval 8 to 283 (PQQRNIGIMA…AVVEYLPSPV (276 aa)). GTP-binding positions include 17–24 (AHIDAGKT), 81–85 (DTPGH), and 135–138 (NKMD).

The protein belongs to the TRAFAC class translation factor GTPase superfamily. Classic translation factor GTPase family. EF-G/EF-2 subfamily.

Its subcellular location is the cytoplasm. Its function is as follows. Catalyzes the GTP-dependent ribosomal translocation step during translation elongation. During this step, the ribosome changes from the pre-translocational (PRE) to the post-translocational (POST) state as the newly formed A-site-bound peptidyl-tRNA and P-site-bound deacylated tRNA move to the P and E sites, respectively. Catalyzes the coordinated movement of the two tRNA molecules, the mRNA and conformational changes in the ribosome. This Oleidesulfovibrio alaskensis (strain ATCC BAA-1058 / DSM 17464 / G20) (Desulfovibrio alaskensis) protein is Elongation factor G.